We begin with the raw amino-acid sequence, 141 residues long: Nucleoside triphosphatase NudI (141 aa).

One can recognise a Nudix hydrolase domain in the interval 1–141 (MRQRTIVCPL…RHTLALKGLL (141 aa)). Positions 38 to 59 (GGVEPGERIEEALRREVREELG) match the Nudix box motif.

It belongs to the Nudix hydrolase family. NudI subfamily. Monomer. Mg(2+) is required as a cofactor.

It carries out the reaction a ribonucleoside 5'-triphosphate + H2O = a ribonucleoside 5'-phosphate + diphosphate + H(+). The enzyme catalyses a 2'-deoxyribonucleoside 5'-triphosphate + H2O = a 2'-deoxyribonucleoside 5'-phosphate + diphosphate + H(+). It catalyses the reaction dUTP + H2O = dUMP + diphosphate + H(+). The catalysed reaction is dTTP + H2O = dTMP + diphosphate + H(+). It carries out the reaction dCTP + H2O = dCMP + diphosphate + H(+). Its function is as follows. Catalyzes the hydrolysis of nucleoside triphosphates, with a preference for pyrimidine deoxynucleoside triphosphates (dUTP, dTTP and dCTP). The polypeptide is Nucleoside triphosphatase NudI (Salmonella agona (strain SL483)).